The following is a 163-amino-acid chain: DNA polymerase epsilon subunit D (163 aa).

2 disordered regions span residues 1–22 (MPPKGHKKTADGDFRPVNSAGN) and 126–163 (RKKDKVVRAQDDQDHISSSESETEATEEEGNKRIRTDE). Composition is skewed to basic and acidic residues over residues 126–142 (RKKDKVVRAQDDQDHIS) and 154–163 (EGNKRIRTDE).

As to quaternary structure, heterotetramer. Consists of four subunits: POL2, DPB2, DPB3 and DPB4.

It is found in the nucleus. Functionally, as accessory component of the DNA polymerase epsilon (DNA polymerase II) participates in chromosomal DNA replication. This is DNA polymerase epsilon subunit D (DPB4) from Yarrowia lipolytica (strain CLIB 122 / E 150) (Yeast).